A 795-amino-acid polypeptide reads, in one-letter code: Protein ROOT HAIR DEFECTIVE 3 homolog 1 (795 aa).

Topologically, residues 1–682 (MDADKSEGCC…EANRRGNNWL (682 aa)) are cytoplasmic. The GB1/RHD3-type G domain maps to 39-254 (GLSYAVVSIM…IAPGGLAGDR (216 aa)). 49-56 (GPQSSGKS) is a binding site for GTP. Positions 218-244 (VALSSYEEKEEQFKEQIASLRQRFMHS) form a coiled coil. Residues 683-703 (PPPWAILALIVLGFNEFMTLL) form a helical membrane-spanning segment. At 704–706 (RNP) the chain is on the lumenal side. A helical membrane pass occupies residues 707-727 (LYLGVMFVAFLLAKALWTQLD). At 728 to 795 (IPGEFRNGAL…PDHKSSSKED (68 aa)) the chain is on the cytoplasmic side. A disordered region spans residues 761–795 (QGEDPPAANPENRRSSNNTSSSENPPDHKSSSKED). Over residues 775-784 (SSNNTSSSEN) the composition is skewed to low complexity. Over residues 785–795 (PPDHKSSSKED) the composition is skewed to basic and acidic residues.

The protein belongs to the TRAFAC class dynamin-like GTPase superfamily. GB1/RHD3 GTPase family. RHD3 subfamily. Specifically expressed in flowers.

Its subcellular location is the endoplasmic reticulum membrane. Functionally, probable GTP-binding protein that may be involved in cell development. In Arabidopsis thaliana (Mouse-ear cress), this protein is Protein ROOT HAIR DEFECTIVE 3 homolog 1.